Reading from the N-terminus, the 62-residue chain is Conotoxin Im11.9 (62 aa).

A signal peptide spans 1 to 22 (MFRVTSVLLVIVLLNLVVLTNA). 4 disulfide bridges follow: Cys-23-Cys-33, Cys-27-Cys-38, Cys-32-Cys-41, and Cys-37-Cys-46. A propeptide spanning residues 23 to 49 (CHMDCSKMTCCSGICCFYCGRPMCPGT) is cleaved from the precursor.

It belongs to the conotoxin I2 superfamily. As to expression, expressed by the venom duct.

It localises to the secreted. Its function is as follows. Probable neurotoxin. The protein is Conotoxin Im11.9 of Conus imperialis (Imperial cone).